We begin with the raw amino-acid sequence, 101 residues long: Small ribosomal subunit protein uS14 (101 aa).

Basic and acidic residues predominate over residues 1–11 (MAKKSSVEKNN). Residues 1-22 (MAKKSSVEKNNRRQRMVKNAAA) form a disordered region. Over residues 12 to 22 (RRQRMVKNAAA) the composition is skewed to basic residues.

This sequence belongs to the universal ribosomal protein uS14 family. In terms of assembly, part of the 30S ribosomal subunit. Contacts proteins S3 and S10.

In terms of biological role, binds 16S rRNA, required for the assembly of 30S particles and may also be responsible for determining the conformation of the 16S rRNA at the A site. This chain is Small ribosomal subunit protein uS14, found in Afipia carboxidovorans (strain ATCC 49405 / DSM 1227 / KCTC 32145 / OM5) (Oligotropha carboxidovorans).